The sequence spans 217 residues: Zinc finger CCHC-type and RNA-binding motif-containing protein 1 (217 aa).

One can recognise an RRM domain in the interval 10–88; that stretch reads STVYVSNLPF…RVIKASIAID (79 aa). The CCHC-type zinc-finger motif lies at 105–122; the sequence is SKCYECGESGHLSYACPK. The disordered stretch occupies residues 120–217; the sequence is CPKNMLGERE…YFSDEEELSD (98 aa). Acidic residues predominate over residues 145–163; the sequence is PEEEIEEVEESEDEGEDPA. A phosphoserine mark is found at serine 155, serine 210, and serine 216.

Component of the U11/U12 snRNPs that are part of the U12-type spliceosome.

It localises to the nucleus. The protein localises to the nucleoplasm. This Homo sapiens (Human) protein is Zinc finger CCHC-type and RNA-binding motif-containing protein 1 (ZCRB1).